The primary structure comprises 496 residues: Angiopoietin-2 (496 aa).

Positions 1 to 18 (MWQIVFLTFGCDLVLASA) are cleaved as a signal peptide. 6 N-linked (GlcNAc...) asparagine glycosylation sites follow: Asn89, Asn119, Asn133, Asn151, Asn240, and Asn304. The stretch at 159-256 (QLLQHSISTN…QQHDLMETVN (98 aa)) forms a coiled coil. The 217-residue stretch at 280–496 (TFRDCAEIFK…TTMMIRPADF (217 aa)) folds into the Fibrinogen C-terminal domain. A disulfide bridge links Cys284 with Cys313. Ca(2+) is bound by residues Asp429, Asp431, Cys433, and Cys435. Intrachain disulfides connect Cys433–Cys435 and Cys437–Cys450.

In terms of assembly, interacts with TEK/TIE2, competing for the same binding site as ANGPT1. Interacts with ITGA5. Interacts with SVEP1/polydom. Interacts with THBD; this interaction significantly inhibits the generation of activated PC and TAFIa/CPB2 by the thrombin/thrombomodulin complex.

The protein localises to the secreted. Functionally, binds to TEK/TIE2, competing for the ANGPT1 binding site, and modulating ANGPT1 signaling. Can induce tyrosine phosphorylation of TEK/TIE2 in the absence of ANGPT1. In the absence of angiogenic inducers, such as VEGF, ANGPT2-mediated loosening of cell-matrix contacts may induce endothelial cell apoptosis with consequent vascular regression. In concert with VEGF, it may facilitate endothelial cell migration and proliferation, thus serving as a permissive angiogenic signal. Involved in the regulation of lymphangiogenesis. The chain is Angiopoietin-2 (Angpt2) from Rattus norvegicus (Rat).